Reading from the N-terminus, the 269-residue chain is Thiazole synthase (269 aa).

Lysine 95 (schiff-base intermediate with DXP) is an active-site residue. 1-deoxy-D-xylulose 5-phosphate contacts are provided by residues glycine 156, 182 to 183 (AG), and 204 to 205 (NT).

The protein belongs to the ThiG family. Homotetramer. Forms heterodimers with either ThiH or ThiS.

It is found in the cytoplasm. The enzyme catalyses [ThiS sulfur-carrier protein]-C-terminal-Gly-aminoethanethioate + 2-iminoacetate + 1-deoxy-D-xylulose 5-phosphate = [ThiS sulfur-carrier protein]-C-terminal Gly-Gly + 2-[(2R,5Z)-2-carboxy-4-methylthiazol-5(2H)-ylidene]ethyl phosphate + 2 H2O + H(+). It participates in cofactor biosynthesis; thiamine diphosphate biosynthesis. In terms of biological role, catalyzes the rearrangement of 1-deoxy-D-xylulose 5-phosphate (DXP) to produce the thiazole phosphate moiety of thiamine. Sulfur is provided by the thiocarboxylate moiety of the carrier protein ThiS. In vitro, sulfur can be provided by H(2)S. This Shewanella frigidimarina (strain NCIMB 400) protein is Thiazole synthase.